The chain runs to 370 residues: Protein FAM110B (370 aa).

2 disordered regions span residues 127 to 151 and 237 to 256; these read SSEG…RSEA and KSPE…RPSL. Residues Ser-238 and Ser-301 each carry the phosphoserine modification. The disordered stretch occupies residues 317–337; the sequence is DCEQSQDSNSDLRNDDSANDR. Basic and acidic residues predominate over residues 326–335; that stretch reads SDLRNDDSAN.

It belongs to the FAM110 family. As to expression, detected in thyroid, spleen and testis, and at lower levels in stomach, spinal cord, lymph node, trachea, adrenal gland, prostate, ovary and intestine.

The protein localises to the cytoplasm. It is found in the cytoskeleton. The protein resides in the microtubule organizing center. Its subcellular location is the centrosome. May be involved in tumor progression. The protein is Protein FAM110B (FAM110B) of Homo sapiens (Human).